Here is a 122-residue protein sequence, read N- to C-terminus: UPF0102 protein CA_C1763 (122 aa).

The protein belongs to the UPF0102 family.

The protein is UPF0102 protein CA_C1763 of Clostridium acetobutylicum (strain ATCC 824 / DSM 792 / JCM 1419 / IAM 19013 / LMG 5710 / NBRC 13948 / NRRL B-527 / VKM B-1787 / 2291 / W).